Consider the following 391-residue polypeptide: Transforming growth factor beta-1 proprotein (391 aa).

Residues 1 to 18 form the signal peptide; the sequence is MDPSPLLALLLLLGAARA. Positions 19 to 63 are straightjacket domain; that stretch reads LSTCQRLDLEAAKKKRIEAVRGQILSKLRLTAPPPASETPPRPLP. The segment at 64–270 is arm domain; it reads DDVRALYNST…ALPAERANEL (207 aa). 3 N-linked (GlcNAc...) asparagine glycosylation sites follow: Asn71, Asn126, and Asn171. The interval 221–249 is bowtie tail; that stretch reads EMGPGHADEMRISIEGFEQQRGDMQSIAK. A Cell attachment site motif is present at residues 241-243; that stretch reads RGD. Cystine bridges form between Cys284/Cys295, Cys294/Cys357, Cys323/Cys388, and Cys327/Cys390.

It belongs to the TGF-beta family. Latency-associated peptide: Homodimer; disulfide-linked. Latency-associated peptide: Interacts with Transforming growth factor beta-1 (TGF-beta-1) chain; interaction is non-covalent and maintains (TGF-beta-1) in a latent state; each Latency-associated peptide (LAP) monomer interacts with TGF-beta-1 in the other monomer. Transforming growth factor beta-1: Homodimer; disulfide-linked. Transforming growth factor beta-1: Interacts with TGF-beta receptors (TGFBR1 and TGFBR2), leading to signal transduction. In terms of processing, transforming growth factor beta-1 proprotein: The precursor proprotein is cleaved in the Golgi apparatus to form Transforming growth factor beta-1 (TGF-beta-1) and Latency-associated peptide (LAP) chains, which remain non-covalently linked, rendering TGF-beta-1 inactive.

Its subcellular location is the secreted. It is found in the extracellular space. The protein resides in the extracellular matrix. Functionally, transforming growth factor beta-1 proprotein: Precursor of the Latency-associated peptide (LAP) and Transforming growth factor beta-1 (TGF-beta-1) chains, which constitute the regulatory and active subunit of TGF-beta-1, respectively. Its function is as follows. Required to maintain the Transforming growth factor beta-1 (TGF-beta-1) chain in a latent state during storage in extracellular matrix. Associates non-covalently with TGF-beta-1 and regulates its activation via interaction with 'milieu molecules', such as LTBP1, LRRC32/GARP and LRRC33/NRROS, that control activation of TGF-beta-1. Interaction with integrins (ITGAV:ITGB6 or ITGAV:ITGB8) results in distortion of the Latency-associated peptide chain and subsequent release of the active TGF-beta-1. In terms of biological role, transforming growth factor beta-1: Multifunctional protein that regulates the growth and differentiation of various cell types and is involved in various processes, such as normal development, immune function, microglia function and responses to neurodegeneration. Activation into mature form follows different steps: following cleavage of the proprotein in the Golgi apparatus, Latency-associated peptide (LAP) and Transforming growth factor beta-1 (TGF-beta-1) chains remain non-covalently linked rendering TGF-beta-1 inactive during storage in extracellular matrix. At the same time, LAP chain interacts with 'milieu molecules', such as LTBP1, LRRC32/GARP and LRRC33/NRROS that control activation of TGF-beta-1 and maintain it in a latent state during storage in extracellular milieus. TGF-beta-1 is released from LAP by integrins (ITGAV:ITGB6 or ITGAV:ITGB8): integrin-binding to LAP stabilizes an alternative conformation of the LAP bowtie tail and results in distortion of the LAP chain and subsequent release of the active TGF-beta-1. Once activated following release of LAP, TGF-beta-1 acts by binding to TGF-beta receptors (TGFBR1 and TGFBR2), which transduce signal. While expressed by many cells types, TGF-beta-1 only has a very localized range of action within cell environment thanks to fine regulation of its activation by Latency-associated peptide chain (LAP) and 'milieu molecules'. Plays an important role in bone remodeling: acts as a potent stimulator of osteoblastic bone formation. Can promote either T-helper 17 cells (Th17) or regulatory T-cells (Treg) lineage differentiation in a concentration-dependent manner. Can induce epithelial-to-mesenchymal transition (EMT) and cell migration in various cell types. The sequence is that of Transforming growth factor beta-1 proprotein (TGFB1) from Gallus gallus (Chicken).